The chain runs to 300 residues: 17-beta-hydroxysteroid dehydrogenase 13 (300 aa).

A signal peptide spans 1 to 19; it reads MNLILELLLLVGIIIYSYL. The residue at position 33 (Ser-33) is a Phosphoserine. 40-67 is an NAD(+) binding site; that stretch reads LITGAGHGIGRLTAYEFAKQKSRLVLWD. Ser-69 is subject to Phosphoserine. Lys-79 carries the post-translational modification N6-acetyllysine. Ser-172 provides a ligand contact to substrate. Tyr-185 (proton acceptor) is an active-site residue. Position 189 (Lys-189) interacts with NAD(+).

The protein belongs to the short-chain dehydrogenases/reductases (SDR) family.

It localises to the lipid droplet. It is found in the endoplasmic reticulum. It catalyses the reaction 17beta-estradiol + NAD(+) = estrone + NADH + H(+). The enzyme catalyses all-trans-retinol + NAD(+) = all-trans-retinal + NADH + H(+). It carries out the reaction all-trans-retinal + NAD(+) + H2O = all-trans-retinoate + NADH + 2 H(+). Functionally, plays a pivotal role in hepatic lipid metabolism. In vitro, it catalyzes the oxidation of a variety of lipid substrates, including 17beta-estradiol, retinol, retinal, and leukotriene B4. This Rattus norvegicus (Rat) protein is 17-beta-hydroxysteroid dehydrogenase 13 (Hsd17b13).